Reading from the N-terminus, the 559-residue chain is 5'-AMP-activated protein kinase catalytic subunit alpha-1 (559 aa).

Positions 27–279 (YILGDTLGVG…IKDIREHEWF (253 aa)) constitute a Protein kinase domain. A Phosphothreonine modification is found at Thr-32. ATP-binding positions include 33–41 (LGVGTFGKV) and Lys-56. Residue Asp-150 is the Proton acceptor of the active site. A Phosphothreonine; by LKB1 and CaMKK2 modification is found at Thr-183. Residues 302–381 (EALKEVCEKF…PERVPFLVAE (80 aa)) are AIS. Position 355 is a phosphothreonine (Thr-355). Ser-356 carries the phosphoserine modification. Residue Ser-360 is modified to Phosphoserine; by ULK1. A Phosphothreonine; by ULK1 modification is found at Thr-368. Thr-382 carries the post-translational modification Phosphothreonine. Position 397 is a phosphoserine; by ULK1 (Ser-397). Residues Ser-467 and Ser-486 each carry the phosphoserine modification. The span at 485-505 (KSGTATPQRSGSISNYRSCQR) shows a compositional bias: polar residues. The segment at 485–536 (KSGTATPQRSGSISNYRSCQRSDSDAEAQGKPSDVSLTSSVTSLDSSPVDVA) is disordered. A Phosphothreonine; by ULK1 modification is found at Thr-488. Residue Thr-490 is modified to Phosphothreonine. Residues Ser-496, Ser-508, Ser-524, and Ser-527 each carry the phosphoserine modification. Over residues 516–535 (PSDVSLTSSVTSLDSSPVDV) the composition is skewed to low complexity.

This sequence belongs to the protein kinase superfamily. CAMK Ser/Thr protein kinase family. SNF1 subfamily. As to quaternary structure, AMPK is a heterotrimer of an alpha catalytic subunit (PRKAA1 or PRKAA2), a beta (PRKAB1 or PRKAB2) and a gamma non-catalytic subunits (PRKAG1, PRKAG2 or PRKAG3). Interacts with FNIP1 and FNIP2. Mg(2+) serves as cofactor. Post-translationally, phosphorylated at Thr-183 by STK11/LKB1 in complex with STE20-related adapter-alpha (STRADA) pseudo kinase and CAB39. Also phosphorylated at Thr-183 by CAMKK2; triggered by a rise in intracellular calcium ions, without detectable changes in the AMP/ATP ratio. CAMKK1 can also phosphorylate Thr-183, but at a much lower level. Dephosphorylated by protein phosphatase 2A and 2C (PP2A and PP2C). Phosphorylated by ULK1 and ULK2; leading to negatively regulate AMPK activity and suggesting the existence of a regulatory feedback loop between ULK1, ULK2 and AMPK. Dephosphorylated by PPM1A and PPM1B. Ubiquitinated. In terms of processing, glycosylated; O-GlcNAcylated by OGT, promoting the AMP-activated protein kinase (AMPK) activity.

Its subcellular location is the cytoplasm. It is found in the nucleus. The catalysed reaction is L-seryl-[protein] + ATP = O-phospho-L-seryl-[protein] + ADP + H(+). The enzyme catalyses L-threonyl-[protein] + ATP = O-phospho-L-threonyl-[protein] + ADP + H(+). It catalyses the reaction L-seryl-[acetyl-CoA carboxylase] + ATP = O-phospho-L-seryl-[acetyl-CoA carboxylase] + ADP + H(+). It carries out the reaction L-seryl-[3-hydroxy-3-methylglutaryl-coenzyme A reductase] + ATP = O-phospho-L-seryl-[3-hydroxy-3-methylglutaryl-coenzyme A reductase] + ADP + H(+). The catalysed reaction is L-seryl-[tau protein] + ATP = O-phospho-L-seryl-[tau protein] + ADP + H(+). The enzyme catalyses L-threonyl-[tau protein] + ATP = O-phospho-L-threonyl-[tau protein] + ADP + H(+). With respect to regulation, activated by phosphorylation on Thr-183. Binding of AMP to non-catalytic gamma subunit (PRKAG1, PRKAG2 or PRKAG3) results in allosteric activation, inducing phosphorylation on Thr-183. AMP-binding to gamma subunit also sustains activity by preventing dephosphorylation of Thr-183. ADP also stimulates Thr-183 phosphorylation, without stimulating already phosphorylated AMPK. ATP promotes dephosphorylation of Thr-183, rendering the enzyme inactive. Under physiological conditions AMPK mainly exists in its inactive form in complex with ATP, which is much more abundant than AMP. Selectively inhibited by compound C (6-[4-(2-Piperidin-1-yl-ethoxy)-phenyl)]-3-pyridin-4-yl-pyyrazolo[1,5-a] pyrimidine. Activated by resveratrol, a natural polyphenol present in red wine, and S17834, a synthetic polyphenol. Catalytic subunit of AMP-activated protein kinase (AMPK), an energy sensor protein kinase that plays a key role in regulating cellular energy metabolism. In response to reduction of intracellular ATP levels, AMPK activates energy-producing pathways and inhibits energy-consuming processes: inhibits protein, carbohydrate and lipid biosynthesis, as well as cell growth and proliferation. AMPK acts via direct phosphorylation of metabolic enzymes, and by longer-term effects via phosphorylation of transcription regulators. Regulates lipid synthesis by phosphorylating and inactivating lipid metabolic enzymes such as ACACA, ACACB, GYS1, HMGCR and LIPE; regulates fatty acid and cholesterol synthesis by phosphorylating acetyl-CoA carboxylase (ACACA and ACACB) and hormone-sensitive lipase (LIPE) enzymes, respectively. Promotes lipolysis of lipid droplets by mediating phosphorylation of isoform 1 of CHKA (CHKalpha2). Regulates insulin-signaling and glycolysis by phosphorylating IRS1, PFKFB2 and PFKFB3. AMPK stimulates glucose uptake in muscle by increasing the translocation of the glucose transporter SLC2A4/GLUT4 to the plasma membrane, possibly by mediating phosphorylation of TBC1D4/AS160. Regulates transcription and chromatin structure by phosphorylating transcription regulators involved in energy metabolism such as CRTC2/TORC2, FOXO3, histone H2B, HDAC5, MEF2C, MLXIPL/ChREBP, EP300, HNF4A, p53/TP53, SREBF1, SREBF2 and PPARGC1A. Acts as a key regulator of glucose homeostasis in liver by phosphorylating CRTC2/TORC2, leading to CRTC2/TORC2 sequestration in the cytoplasm. In response to stress, phosphorylates 'Ser-36' of histone H2B (H2BS36ph), leading to promote transcription. Acts as a key regulator of cell growth and proliferation by phosphorylating FNIP1, TSC2, RPTOR, WDR24 and ATG1/ULK1: in response to nutrient limitation, negatively regulates the mTORC1 complex by phosphorylating RPTOR component of the mTORC1 complex and by phosphorylating and activating TSC2. Also phosphorylates and inhibits GATOR2 subunit WDR24 in response to nutrient limitation, leading to suppress glucose-mediated mTORC1 activation. In response to energetic stress, phosphorylates FNIP1, inactivating the non-canonical mTORC1 signaling, thereby promoting nuclear translocation of TFEB and TFE3, and inducing transcription of lysosomal or autophagy genes. In response to nutrient limitation, promotes autophagy by phosphorylating and activating ATG1/ULK1. In that process, it also activates WDR45/WIPI4. Phosphorylates CASP6, thereby preventing its autoprocessing and subsequent activation. In response to nutrient limitation, phosphorylates transcription factor FOXO3 promoting FOXO3 mitochondrial import. Also acts as a regulator of cellular polarity by remodeling the actin cytoskeleton; probably by indirectly activating myosin. AMPK also acts as a regulator of circadian rhythm by mediating phosphorylation of CRY1, leading to destabilize it. May regulate the Wnt signaling pathway by phosphorylating CTNNB1, leading to stabilize it. Also has tau-protein kinase activity: in response to amyloid beta A4 protein (APP) exposure, activated by CAMKK2, leading to phosphorylation of MAPT/TAU; however the relevance of such data remains unclear in vivo. Also phosphorylates CFTR, EEF2K, KLC1, NOS3 and SLC12A1. Regulates hepatic lipogenesis. Activated via SIRT3, represses sterol regulatory element-binding protein (SREBP) transcriptional activities and ATP-consuming lipogenesis to restore cellular energy balance. Upon stress, regulates mitochondrial fragmentation through phosphorylation of MTFR1L. The chain is 5'-AMP-activated protein kinase catalytic subunit alpha-1 (Prkaa1) from Mus musculus (Mouse).